The primary structure comprises 374 residues: Cobalt-precorrin-5B C(1)-methyltransferase (374 aa).

This sequence belongs to the CbiD family.

The enzyme catalyses Co-precorrin-5B + S-adenosyl-L-methionine = Co-precorrin-6A + S-adenosyl-L-homocysteine. It participates in cofactor biosynthesis; adenosylcobalamin biosynthesis; cob(II)yrinate a,c-diamide from sirohydrochlorin (anaerobic route): step 6/10. In terms of biological role, catalyzes the methylation of C-1 in cobalt-precorrin-5B to form cobalt-precorrin-6A. This chain is Cobalt-precorrin-5B C(1)-methyltransferase, found in Synechococcus elongatus (strain ATCC 33912 / PCC 7942 / FACHB-805) (Anacystis nidulans R2).